Consider the following 537-residue polypeptide: Glucan 1,6-alpha-glucosidase (537 aa).

Catalysis depends on D194, which acts as the Nucleophile. The Proton donor role is filled by E236.

It belongs to the glycosyl hydrolase 13 family.

It is found in the cytoplasm. It catalyses the reaction Hydrolysis of (1-&gt;6)-alpha-D-glucosidic linkages in (1-&gt;6)-alpha-D-glucans and derived oligosaccharides.. Its function is as follows. The physiological substrates may be short isomaltosaccharides. This Streptococcus dysgalactiae subsp. equisimilis (Streptococcus equisimilis) protein is Glucan 1,6-alpha-glucosidase (dexB).